A 600-amino-acid polypeptide reads, in one-letter code: Na(+)/dicarboxylate cotransporter 3 (600 aa).

The Cytoplasmic segment spans residues 1–16 (MAALAALAKKVWSARR). A helical transmembrane segment spans residues 17 to 37 (LLVLLLVPLALLPILFALPPK). Residues 38-55 (EGRCLYVILLMAVYWCTE) are Extracellular-facing. Residues 56–76 (ALPLSVTALLPIILFPFMGIL) form a helical membrane-spanning segment. Residues 77 to 82 (PSSKVC) are Cytoplasmic-facing. The helical transmembrane segment at 83–103 (PQYFLDTNFLFLSGLIMASAI) threads the bilayer. Topologically, residues 104–137 (EEWNLHRRIALKVLMLVGVQPARLILGMMVTTSF) are extracellular. Residues 138–158 (LSMWLSNTASTAMMLPIASAI) traverse the membrane as a helical segment. At 159-229 (LKSLFGQREA…KEEEHRRNIW (71 aa)) the chain is on the cytoplasmic side. Residues 230–250 (KGFLISIPYSASIGGTATLTG) form a helical membrane-spanning segment. The Extracellular portion of the chain corresponds to 251–278 (TAPNLILLGQLKSFFPQCDVVNFGSWFI). A helical membrane pass occupies residues 279–299 (FAFPLMLLFLLVGWLWISFLY). Topologically, residues 300–336 (GGMSWRSWRKKKSKIRADAEDQAKAVIQEEFQNLGPI) are cytoplasmic. The chain crosses the membrane as a helical span at residues 337 to 357 (KFAEQAVFILFCTFAILLFSR). The Extracellular segment spans residues 358–372 (DPKFIPGWASLFAPG). Residues 373 to 393 (FVSDAVTGVAIVTILFFFPSQ) form a helical membrane-spanning segment. Residues 394 to 422 (KPSLKWWFDFKAPNSETEPLLSWKKAQET) are Cytoplasmic-facing. Positions 423-443 (VPWNIILLLGGGFAMAKGCEE) form an intramembrane region, helical. Over 444–461 (SGLSAWIGGQLHPLEHVP) the chain is Cytoplasmic. A helical transmembrane segment spans residues 462 to 482 (PLLAVLLITVVIAFFTEFASN). The Extracellular portion of the chain corresponds to 483–505 (TATIIIFLPVLAELAIRLHVHPL). Residues 506-526 (YLMIPGTVGCSYAFMLPVSTP) traverse the membrane as a helical segment. The Cytoplasmic segment spans residues 527-546 (PNSIAFSTGHLLVKDMVRTG). Residues 547 to 567 (LLMNLMGVLLLSLAMNTWAQT) traverse the membrane as a helical segment. Over 568–600 (IFQLGTFPDWANTHAANATALPPALTNNTVQTF) the chain is Extracellular. N-linked (GlcNAc...) asparagine glycans are attached at residues N584 and N594.

It belongs to the SLC13A/DASS transporter (TC 2.A.47) family. NADC subfamily. In terms of tissue distribution, highly expressed in kidney, and at much lower levels in brain.

Its subcellular location is the cell membrane. The enzyme catalyses succinate(out) + 3 Na(+)(out) = succinate(in) + 3 Na(+)(in). The catalysed reaction is 2-oxoglutarate(out) + 3 Na(+)(out) = 2-oxoglutarate(in) + 3 Na(+)(in). It catalyses the reaction N-acetyl-L-aspartate(out) + 3 Na(+)(out) = N-acetyl-L-aspartate(in) + 3 Na(+)(in). It carries out the reaction fumarate(out) + 3 Na(+)(out) = fumarate(in) + 3 Na(+)(in). The enzyme catalyses glutarate(out) + 3 Na(+)(out) = glutarate(in) + 3 Na(+)(in). The catalysed reaction is 2,2-dimethylsuccinate(out) + 3 Na(+)(out) = 2,2-dimethylsuccinate(in) + 3 Na(+)(in). It catalyses the reaction 2,3-dimethylsuccinate(out) + 3 Na(+)(out) = 2,3-dimethylsuccinate(in) + 3 Na(+)(in). It carries out the reaction malate(out) + 3 Na(+)(out) = malate(in) + 3 Na(+)(in). The enzyme catalyses itaconate(out) + 3 Na(+)(out) = itaconate(in) + 3 Na(+)(in). High-affinity sodium-dicarboxylate cotransporter that accepts a range of substrates with 4-6 carbon atoms, such as the citric acid cycle intermediates succinate and alpha-ketoglutarate (2-oxoglutarate), as well as other compounds including N-acetyl-L-aspartate. Transports the dicarboxylate into the cell with a probable stoichiometry of 3 Na(+) for 1 divalent dicarboxylate, rendering the process electrogenic. Can transport citrate in a Na(+)-dependent manner, recognizing the divalent form of citrate rather than the trivalent form which is normally found in blood. Imports itaconate in hepatocytes leading to activation of TFEB-dependent lysosomal biogenesis involved in antibacterial innate immune response. The polypeptide is Na(+)/dicarboxylate cotransporter 3 (Slc13a3) (Mus musculus (Mouse)).